The primary structure comprises 261 residues: Early 39 kDa protein (261 aa).

The disordered stretch occupies residues 215 to 261 (SYVPTPVSNKKRRAPPSAPKKIAKQRRDTKPPPTYVSDNTQDTNMSE). Over residues 250 to 261 (VSDNTQDTNMSE) the composition is skewed to polar residues.

This chain is Early 39 kDa protein, found in Orgyia pseudotsugata multicapsid polyhedrosis virus (OpMNPV).